The sequence spans 398 residues: Succinate--CoA ligase [ADP-forming] subunit beta (398 aa).

The ATP-grasp domain occupies Lys-9–Gln-250. ATP-binding positions include Lys-50, Gly-57–Gly-59, Glu-104, Leu-107, and Glu-112. Asn-205 and Asp-219 together coordinate Mg(2+). Residues Asn-270 and Gly-327–Met-329 contribute to the substrate site.

This sequence belongs to the succinate/malate CoA ligase beta subunit family. Heterotetramer of two alpha and two beta subunits. Mg(2+) is required as a cofactor.

The catalysed reaction is succinate + ATP + CoA = succinyl-CoA + ADP + phosphate. It carries out the reaction GTP + succinate + CoA = succinyl-CoA + GDP + phosphate. Its pathway is carbohydrate metabolism; tricarboxylic acid cycle; succinate from succinyl-CoA (ligase route): step 1/1. In terms of biological role, succinyl-CoA synthetase functions in the citric acid cycle (TCA), coupling the hydrolysis of succinyl-CoA to the synthesis of either ATP or GTP and thus represents the only step of substrate-level phosphorylation in the TCA. The beta subunit provides nucleotide specificity of the enzyme and binds the substrate succinate, while the binding sites for coenzyme A and phosphate are found in the alpha subunit. The chain is Succinate--CoA ligase [ADP-forming] subunit beta from Sorangium cellulosum (strain So ce56) (Polyangium cellulosum (strain So ce56)).